Here is a 106-residue protein sequence, read N- to C-terminus: Large ribosomal subunit protein eL42 (106 aa).

The tract at residues 34–53 (YAQGKRRYDRKQSGYGGQTK) is disordered.

Belongs to the eukaryotic ribosomal protein eL42 family. As to quaternary structure, component of the large ribosomal subunit.

Its subcellular location is the cytoplasm. Functionally, component of the large ribosomal subunit. The ribosome is a large ribonucleoprotein complex responsible for the synthesis of proteins in the cell. The chain is Large ribosomal subunit protein eL42 (Rpl36a) from Canis lupus familiaris (Dog).